Here is a 196-residue protein sequence, read N- to C-terminus: Internal virion protein gp14 (196 aa).

It belongs to the T7virus internal virion protein gp14 family. As to quaternary structure, interacts with the portal protein. Interacts with gp15.

It localises to the virion. Its subcellular location is the host cell outer membrane. Component of the cylindrical core that assembles on the inner surface of the capsid during capsid formation and plays a role in viral DNA ejection into the host cell. The inner core is composed of stacked rings of gp14, gp15 and gp16 proteins. Following binding to the host cell surface, the internal core is disassembled and gp14 is ejected along with gp15 and gp16 into the infected cell. May form a simple channel spanning the outer membrane. This Escherichia phage T7 (Bacteriophage T7) protein is Internal virion protein gp14.